A 615-amino-acid chain; its full sequence is 1-deoxy-D-xylulose-5-phosphate synthase (615 aa).

Thiamine diphosphate is bound by residues His-77 and 118-120 (GHS). Mg(2+) is bound at residue Asp-149. Thiamine diphosphate-binding positions include 150–151 (GA), Asn-178, Tyr-286, and Glu-367. Asn-178 is a Mg(2+) binding site.

Belongs to the transketolase family. DXPS subfamily. Homodimer. Requires Mg(2+) as cofactor. It depends on thiamine diphosphate as a cofactor.

It carries out the reaction D-glyceraldehyde 3-phosphate + pyruvate + H(+) = 1-deoxy-D-xylulose 5-phosphate + CO2. It participates in metabolic intermediate biosynthesis; 1-deoxy-D-xylulose 5-phosphate biosynthesis; 1-deoxy-D-xylulose 5-phosphate from D-glyceraldehyde 3-phosphate and pyruvate: step 1/1. Its function is as follows. Catalyzes the acyloin condensation reaction between C atoms 2 and 3 of pyruvate and glyceraldehyde 3-phosphate to yield 1-deoxy-D-xylulose-5-phosphate (DXP). The protein is 1-deoxy-D-xylulose-5-phosphate synthase of Glaesserella parasuis serovar 5 (strain SH0165) (Haemophilus parasuis).